Consider the following 42-residue polypeptide: Profilin (42 aa).

It belongs to the profilin family. Occurs in many kinds of cells as a complex with monomeric actin in a 1:1 ratio.

It localises to the cytoplasm. Its subcellular location is the cytoskeleton. In terms of biological role, binds to actin and affects the structure of the cytoskeleton. At high concentrations, profilin prevents the polymerization of actin, whereas it enhances it at low concentrations. This Plantago lanceolata (English plantain) protein is Profilin.